Reading from the N-terminus, the 898-residue chain is MVWDRQTKMEYEWKPDEQGLQQILQLLKESQSPDTTIQRTVQQKLEQLNQYPDFNNYLIFVLTKLKSEDEPTRSLSGLILKNNVKAHFQNFPNGVTDFIKSECLNNIGDSSPLIRATVGILITTIASKGELQNWPDLLPKLCSLLDSEDYNTCEGAFGALQKICEDSAEILDSDVLDRPLNIMIPKFLQFFKHSSPKIRSHAVACVNQFIISRTQALMLHIDSFIENLFALAGDEEPEVRKNVCRALVMLLEVRMDRLLPHMHNIVEYMLQRTQDQDENVALEACEFWLTLAEQPICKDVLVRHLPKLIPVLVNGMKYSDIDIILLKGDVEEDETIPDSEQDIRPRFHRSRTVAQQHDEDGIEEEDDDDDEIDDDDTISDWNLRKCSAAALDVLANVYRDELLPHILPLLKELLFHHEWVVKESGILVLGAIAEGCMQGMIPYLPELIPHLIQCLSDKKALVRSITCWTLSRYAHWVVSQPPDTYLKPLMTELLKRILDSNKRVQEAACSAFATLEEEACTELVPYLAYILDTLVFAFSKYQHKNLLILYDAIGTLADSVGHHLNKPEYIQMLMPPLIQKWNMLKDEDKDLFPLLECLSSVATALQSGFLPYCEPVYQRCVNLVQKTLAQAMLNNAQPDQYEAPDKDFMIVALDLLSGLAEGLGGNIEQLVARSNILTLMYQCMQDKMPEVRQSSFALLGDLTKACFQHVKPCIADFMPILGTNLNPEFISVCNNATWAIGEISIQMGIEMQPYIPMVLHQLVEIINRPNTPKTLLENTAITIGRLGYVCPQEVAPMLQQFIRPWCTSLRNIRDNEEKDSAFRGICTMISVNPSGVIQDFIFFCDAVASWINPKDDLRDMFCKILHGFKNQVGDENWRRFSDQFPLPLKERLAAFYGV.

Met-1 is subject to N-acetylmethionine. HEAT repeat units follow at residues 19 to 46 (GLQQILQLLKESQSPDTTIQRTVQQKLE), 51 to 89 (YPDFNNYLIFVLTKLKSEDEPTRSLSGLILKNNVKAHFQ), 98 to 131 (FIKSECLNNIGDSSPLIRATVGILITTIASKGEL), 137 to 174 (LLPKLCSLLDSEDYNTCEGAFGALQKICEDSAEILDSD), 181 to 211 (NIMIPKFLQFFKHSSPKIRSHAVACVNQFII), 224 to 251 (FIENLFALAGDEEPEVRKNVCRALVMLL), 263 to 290 (HNIVEYMLQRTQDQDENVALEACEFWLT), 306 to 397 (PKLI…LANV), 405 to 433 (HILPLLKELLFHHEWVVKESGILVLGAIA), 445 to 472 (PELIPHLIQCLSDKKALVRSITCWTLSR), 486 to 519 (LKPLMTELLKRILDSNKRVQEAACSAFATLEEEA), 527 to 560 (LAYILDTLVFAFSKYQHKNLLILYDAIGTLADSV), 568 to 606 (EYIQMLMPPLIQKWNMLKDEDKDLFPLLECLSSVATALQ), 614 to 665 (EPVY…GLGG), 676 to 707 (ILTLMYQCMQDKMPEVRQSSFALLGDLTKACF), 715 to 748 (ADFMPILGTNLNPEFISVCNNATWAIGEISIQMG), 756 to 791 (PMVLHQLVEIINRPNTPKTLLENTAITIGRLGYVCP), 799 to 832 (QQFIRPWCTSLRNIRDNEEKDSAFRGICTMISVN), 841 to 872 (IFFCDAVASWINPKDDLRDMFCKILHGFKNQV), and 875 to 895 (ENWRRFSDQFPLPLKERLAAF). In terms of domain architecture, Importin N-terminal spans 41-109 (VQQKLEQLNQ…KSECLNNIGD (69 aa)). Residues 347 to 374 (FHRSRTVAQQHDEDGIEEEDDDDDEIDD) form a disordered region. Residues 360-374 (DGIEEEDDDDDEIDD) show a composition bias toward acidic residues.

Belongs to the importin beta family. Importin beta-2 subfamily. In terms of assembly, identified in a complex that contains TNPO1, RAN and RANBP1. Binds HNRPA1, HNRPA2, HNRNPDL, RPS7, RPL5 and RAN. Interacts with H2A, H2B, H3 and H4 histones. Interacts with isoform 1 and isoform 5 of ADAR/ADAR1 (via DRBM 3 domain). Interacts with SNAI1 (via zinc fingers); the interaction mediates SNAI1 nuclear import. Interacts with SNAI2 (via zinc fingers). Interacts with RPL23A (via BIB domain) and SRP19; this interaction is involved in RPL23A and SRP19 import into the nucleus. Interacts (via HEAT repeats 8-12) with BAP1 (via non-classical PY-NLS); this interaction is direct, is involved in BAP1 nuclear import and disrupts BAP1 homodimerization. As to quaternary structure, (Microbial infection) Binds to HIV-1 Rev.

The protein resides in the cytoplasm. Its subcellular location is the nucleus. Functionally, functions in nuclear protein import as nuclear transport receptor. Serves as receptor for nuclear localization signals (NLS) in cargo substrates. May mediate docking of the importin/substrate complex to the nuclear pore complex (NPC) through binding to nucleoporin and the complex is subsequently translocated through the pore by an energy requiring, Ran-dependent mechanism. At the nucleoplasmic side of the NPC, Ran binds to the importin, the importin/substrate complex dissociates and importin is re-exported from the nucleus to the cytoplasm where GTP hydrolysis releases Ran. The directionality of nuclear import is thought to be conferred by an asymmetric distribution of the GTP- and GDP-bound forms of Ran between the cytoplasm and nucleus. Involved in nuclear import of M9-containing proteins. In vitro, binds directly to the M9 region of the heterogeneous nuclear ribonucleoproteins (hnRNP), A1 and A2 and mediates their nuclear import. Involved in hnRNP A1/A2 nuclear export. Mediates the nuclear import of ribosomal proteins RPL23A, RPS7 and RPL5. In vitro, mediates nuclear import of H2A, H2B, H3 and H4 histones. In vitro, mediates nuclear import of SRP19. Mediates nuclear import of ADAR/ADAR1 isoform 1 and isoform 5 in a RanGTP-dependent manner. Main mediator of PR-DUB complex component BAP1 nuclear import; acts redundantly with the karyopherins KPNA1 and KPNA2. Its function is as follows. (Microbial infection) In case of HIV-1 infection, binds and mediates the nuclear import of HIV-1 Rev. The sequence is that of Transportin-1 (TNPO1) from Homo sapiens (Human).